Reading from the N-terminus, the 74-residue chain is Ubiquitin-like protein FUBI (74 aa).

The protein belongs to the ubiquitin family.

This is Ubiquitin-like protein FUBI (Fau) from Rattus norvegicus (Rat).